A 496-amino-acid polypeptide reads, in one-letter code: Lysine--tRNA ligase (496 aa).

Residues E408 and E415 each coordinate Mg(2+).

This sequence belongs to the class-II aminoacyl-tRNA synthetase family. As to quaternary structure, homodimer. The cofactor is Mg(2+).

The protein resides in the cytoplasm. It catalyses the reaction tRNA(Lys) + L-lysine + ATP = L-lysyl-tRNA(Lys) + AMP + diphosphate. The chain is Lysine--tRNA ligase from Legionella pneumophila (strain Paris).